A 466-amino-acid polypeptide reads, in one-letter code: UDP-N-acetylmuramoylalanine--D-glutamate ligase (466 aa).

121-127 serves as a coordination point for ATP; sequence GTNGKST.

The protein belongs to the MurCDEF family.

It localises to the cytoplasm. The enzyme catalyses UDP-N-acetyl-alpha-D-muramoyl-L-alanine + D-glutamate + ATP = UDP-N-acetyl-alpha-D-muramoyl-L-alanyl-D-glutamate + ADP + phosphate + H(+). Its pathway is cell wall biogenesis; peptidoglycan biosynthesis. Cell wall formation. Catalyzes the addition of glutamate to the nucleotide precursor UDP-N-acetylmuramoyl-L-alanine (UMA). The polypeptide is UDP-N-acetylmuramoylalanine--D-glutamate ligase (Rhodopseudomonas palustris (strain HaA2)).